Here is a 31-residue protein sequence, read N- to C-terminus: Kappa-sparatoxin-Hv1c (31 aa).

3 cysteine pairs are disulfide-bonded: C2–C16, C9–C21, and C15–C25. W31 carries the post-translational modification Tryptophan amide.

As to expression, expressed by the venom gland.

The protein localises to the secreted. Blocks transient outward voltage-gated potassium channels in rat ventricular myocytes (thus prolonging action-potential duration) and rat Kv4.2/KCNA4 channels expressed in Xenopus oocytes. Is also a weak blocker of calcium channels in rat cerebellar granule cells. The polypeptide is Kappa-sparatoxin-Hv1c (Heteropoda venatoria (Brown huntsman spider)).